The primary structure comprises 1551 residues: ABC-type transporter phomO (1551 aa).

The next 7 membrane-spanning stretches (helical) occupy residues 34-54, 110-130, 139-159, 172-192, 202-222, 314-334, and 358-378; these read LYFE…LLAA, CTAG…CTTV, SVPA…LAHF, SSSL…APLV, GSAL…LIAV, LGLY…FTLA, and GLIG…GWYW. The ABC transmembrane type-1 1 domain maps to 326 to 599; that stretch reads LCLAGFTLAQ…LLQIIPSFGA (274 aa). Asn-384 carries N-linked (GlcNAc...) asparagine glycosylation. 4 helical membrane passes run 428-448, 452-472, 535-555, and 577-597; these read LAYA…TWML, VGPP…ASTY, LIVG…VLVF, and LIWI…IPSF. The ABC transporter 1 domain occupies 645–861; sequence IHNSSFSYTD…VEDENGDVDN (217 aa). N-linked (GlcNAc...) asparagine glycosylation occurs at Asn-647. 678–685 provides a ligand contact to ATP; that stretch reads GPAGCGKS. The N-linked (GlcNAc...) asparagine glycan is linked to Asn-721. A disordered region spans residues 843 to 889; the sequence is YQFPPSQADVEDENGDVDNGAENTRPRESSHTTEAQSGPPEPKSKPT. 4 consecutive transmembrane segments (helical) span residues 903–923, 959–979, 1027–1044, and 1137–1157; these read SIGF…AFCL, VLPL…IVPL, LFNT…VILI, and LVLN…AVGL. One can recognise an ABC transmembrane type-1 2 domain in the interval 910 to 1199; the sequence is VLFIGGGIIF…LLTAWTSLET (290 aa). N-linked (GlcNAc...) asparagine glycosylation occurs at Asn-1179. Positions 1219–1228 are enriched in basic and acidic residues; sequence DVLVRPDSLD. Residues 1219–1296 are disordered; that stretch reads DVLVRPDSLD…HEATTITTTS (78 aa). The segment covering 1259–1270 has biased composition (acidic residues); the sequence is YDDDDESDENTD. Residues 1287–1535 enclose the ABC transporter 2 domain; that stretch reads HEATTITTTS…SDIFAFFGRS (249 aa). Residue 1323 to 1330 coordinates ATP; that stretch reads GRTGSGKS. Asn-1486 carries an N-linked (GlcNAc...) asparagine glycan.

It belongs to the ABC transporter superfamily. ABCC family. Conjugate transporter (TC 3.A.1.208) subfamily.

The protein localises to the membrane. In terms of biological role, ABC-type transporter; part of the gene cluster that mediates the biosynthesis of the phomopsins, a group of hexapeptide mycotoxins which infects lupins and causes lupinosis disease in livestock. The sequence is that of ABC-type transporter phomO from Diaporthe leptostromiformis (Lupinosis disease fungus).